A 402-amino-acid chain; its full sequence is Oxysterol-binding protein 12 (402 aa).

A disordered region spans residues 333–366 (NNNNDKETAEEKAKIEEKQRKEESERREKGILWE). The segment covering 336–366 (NDKETAEEKAKIEEKQRKEESERREKGILWE) has biased composition (basic and acidic residues).

It belongs to the OSBP family.

This chain is Oxysterol-binding protein 12 (osbL), found in Dictyostelium discoideum (Social amoeba).